An 821-amino-acid chain; its full sequence is DNA ligase (821 aa).

Residues 33–37, 82–83, and glutamate 113 each bind NAD(+); these read DVDYD and SL. Catalysis depends on lysine 115, which acts as the N6-AMP-lysine intermediate. NAD(+) contacts are provided by arginine 136, glutamate 173, lysine 290, and lysine 314. Residues cysteine 408, cysteine 411, cysteine 426, and cysteine 432 each coordinate Zn(2+). A BRCT domain is found at 741–821; the sequence is IVAGPLDGQT…RLLAYLAEHE (81 aa).

Belongs to the NAD-dependent DNA ligase family. LigA subfamily. Requires Mg(2+) as cofactor. The cofactor is Mn(2+).

It carries out the reaction NAD(+) + (deoxyribonucleotide)n-3'-hydroxyl + 5'-phospho-(deoxyribonucleotide)m = (deoxyribonucleotide)n+m + AMP + beta-nicotinamide D-nucleotide.. Its function is as follows. DNA ligase that catalyzes the formation of phosphodiester linkages between 5'-phosphoryl and 3'-hydroxyl groups in double-stranded DNA using NAD as a coenzyme and as the energy source for the reaction. It is essential for DNA replication and repair of damaged DNA. This is DNA ligase from Stenotrophomonas maltophilia (strain K279a).